A 41-amino-acid chain; its full sequence is Large ribosomal subunit protein bL36 (41 aa).

This sequence belongs to the bacterial ribosomal protein bL36 family.

The protein is Large ribosomal subunit protein bL36 of Phenylobacterium zucineum (strain HLK1).